The primary structure comprises 865 residues: Alanine--tRNA ligase (865 aa).

Zn(2+)-binding residues include H554, H558, C656, and H660.

This sequence belongs to the class-II aminoacyl-tRNA synthetase family. It depends on Zn(2+) as a cofactor.

It is found in the cytoplasm. The catalysed reaction is tRNA(Ala) + L-alanine + ATP = L-alanyl-tRNA(Ala) + AMP + diphosphate. Catalyzes the attachment of alanine to tRNA(Ala) in a two-step reaction: alanine is first activated by ATP to form Ala-AMP and then transferred to the acceptor end of tRNA(Ala). Also edits incorrectly charged Ser-tRNA(Ala) and Gly-tRNA(Ala) via its editing domain. This is Alanine--tRNA ligase from Francisella tularensis subsp. mediasiatica (strain FSC147).